A 553-amino-acid polypeptide reads, in one-letter code: Retrotransposon Gag-like protein 3 (553 aa).

Residues 2-43 (VEDLAASYVTLKLENEILQAQVKRLMEENAALQAQIPELQKS) adopt a coiled-coil conformation. 2 disordered regions span residues 38 to 274 (PELQ…PLDP) and 474 to 514 (SGGV…EAER). Residues 45–57 (AVKEHEPLRKPSE) are compositionally biased toward basic and acidic residues. The segment covering 58-73 (AQEPPESPEFPAARES) has biased composition (low complexity). Basic and acidic residues predominate over residues 87–113 (EPTKIREPREPSAISELREPPEIKEPQ). Polar residues predominate over residues 118–127 (TNESGESSAI). Positions 132–147 (GSPEIKEPHLPPKSKE) are enriched in basic and acidic residues. A compositionally biased stretch (polar residues) spans 239–250 (QTVPEYQETSSQ). Low complexity predominate over residues 474–483 (SGGVDSSSSS). Polar residues predominate over residues 495–507 (TENQPVQATSNRP). Residues 523–537 (CLYCGHPGHFARDCP) form a CCHC-type zinc finger.

As to expression, expressed in embryonic myogenic progenitor cells, not expressed in adult and aged satellite cells.

It localises to the nucleus. In terms of biological role, may function as a transcriptional regulator. Plays a role in postnatal myogenesis, may be involved in the regulation of satellite cells self-renewal. This is Retrotransposon Gag-like protein 3 from Mus musculus (Mouse).